The chain runs to 84 residues: Small ribosomal subunit protein bS20 (84 aa).

A disordered region spans residues 1-32 (MPRHESAKKRMRQNEKRQKRNKSQKSRVRTKI).

It belongs to the bacterial ribosomal protein bS20 family.

Its function is as follows. Binds directly to 16S ribosomal RNA. This is Small ribosomal subunit protein bS20 from Salinibacter ruber (strain DSM 13855 / M31).